Consider the following 502-residue polypeptide: AMP phosphorylase (502 aa).

AMP contacts are provided by residues Gly-168, 195 to 200 (SRAITS), and Thr-204. The Proton donor role is filled by Asp-257. The AMP site is built by Ser-265 and Lys-289.

Belongs to the thymidine/pyrimidine-nucleoside phosphorylase family. Type 2 subfamily.

It catalyses the reaction AMP + phosphate = alpha-D-ribose 1,5-bisphosphate + adenine. The catalysed reaction is CMP + phosphate = cytosine + alpha-D-ribose 1,5-bisphosphate. The enzyme catalyses UMP + phosphate = alpha-D-ribose 1,5-bisphosphate + uracil. Functionally, catalyzes the conversion of AMP and phosphate to adenine and ribose 1,5-bisphosphate (R15P). Exhibits phosphorylase activity toward CMP and UMP in addition to AMP. Functions in an archaeal AMP degradation pathway, together with R15P isomerase and RubisCO. This is AMP phosphorylase from Hyperthermus butylicus (strain DSM 5456 / JCM 9403 / PLM1-5).